Consider the following 101-residue polypeptide: Large ribosomal subunit protein bL21 (101 aa).

This sequence belongs to the bacterial ribosomal protein bL21 family. In terms of assembly, part of the 50S ribosomal subunit. Contacts protein L20.

In terms of biological role, this protein binds to 23S rRNA in the presence of protein L20. In Beutenbergia cavernae (strain ATCC BAA-8 / DSM 12333 / CCUG 43141 / JCM 11478 / NBRC 16432 / NCIMB 13614 / HKI 0122), this protein is Large ribosomal subunit protein bL21.